Here is a 777-residue protein sequence, read N- to C-terminus: 5-methyltetrahydropteroyltriglutamate--homocysteine methyltransferase (777 aa).

5-methyltetrahydropteroyltri-L-glutamate-binding positions include 17 to 20 (RELK) and Lys132. L-homocysteine contacts are provided by residues 455–457 (IGS) and Glu508. Residues 455–457 (IGS) and Glu508 each bind L-methionine. 5-methyltetrahydropteroyltri-L-glutamate contacts are provided by residues 539–540 (RC) and Trp585. Asp623 is an L-homocysteine binding site. Asp623 lines the L-methionine pocket. Glu629 contacts 5-methyltetrahydropteroyltri-L-glutamate. Zn(2+) is bound by residues His665, Cys667, and Glu689. The active-site Proton donor is the His718. Cys750 is a binding site for Zn(2+).

This sequence belongs to the vitamin-B12 independent methionine synthase family. Zn(2+) serves as cofactor.

It carries out the reaction 5-methyltetrahydropteroyltri-L-glutamate + L-homocysteine = tetrahydropteroyltri-L-glutamate + L-methionine. It participates in amino-acid biosynthesis; L-methionine biosynthesis via de novo pathway; L-methionine from L-homocysteine (MetE route): step 1/1. Catalyzes the transfer of a methyl group from 5-methyltetrahydrofolate to homocysteine resulting in methionine formation. This Caulobacter vibrioides (strain ATCC 19089 / CIP 103742 / CB 15) (Caulobacter crescentus) protein is 5-methyltetrahydropteroyltriglutamate--homocysteine methyltransferase.